A 133-amino-acid chain; its full sequence is MTRLIYFSSRSENTHRFIARLGLPAARIPLEDRERLRADEPYILVVPTYGGGGTAGAVPRQVIRFLNDEHNRALLRGVIAAGNRNFGEGFCRAGDIIAHKCQVPFLYRFELMGTGQDIDNVRKGVSEFWQRQH.

This sequence belongs to the NrdI family.

Probably involved in ribonucleotide reductase function. This chain is Protein NrdI, found in Cronobacter sakazakii (strain ATCC BAA-894) (Enterobacter sakazakii).